The primary structure comprises 549 residues: Chaperonin GroEL (549 aa).

ATP contacts are provided by residues 30–33, lysine 51, 87–91, glycine 415, and aspartate 495; these read TLGP and DGTTT.

This sequence belongs to the chaperonin (HSP60) family. In terms of assembly, forms a cylinder of 14 subunits composed of two heptameric rings stacked back-to-back. Interacts with the co-chaperonin GroES.

The protein localises to the cytoplasm. It catalyses the reaction ATP + H2O + a folded polypeptide = ADP + phosphate + an unfolded polypeptide.. Functionally, together with its co-chaperonin GroES, plays an essential role in assisting protein folding. The GroEL-GroES system forms a nano-cage that allows encapsulation of the non-native substrate proteins and provides a physical environment optimized to promote and accelerate protein folding. This Hahella chejuensis (strain KCTC 2396) protein is Chaperonin GroEL.